A 395-amino-acid chain; its full sequence is S-adenosylmethionine synthase (395 aa).

H14 serves as a coordination point for ATP. D16 provides a ligand contact to Mg(2+). Residue E42 participates in K(+) binding. Residues E55 and Q98 each coordinate L-methionine. The tract at residues 98–108 (QSPDIALGVDK) is flexible loop. ATP contacts are provided by residues 175–177 (DGK), 242–243 (RF), D251, 257–258 (RK), A274, and K278. Residue D251 participates in L-methionine binding. Residue K282 participates in L-methionine binding.

It belongs to the AdoMet synthase family. In terms of assembly, homotetramer; dimer of dimers. Mg(2+) serves as cofactor. The cofactor is K(+).

Its subcellular location is the cytoplasm. It carries out the reaction L-methionine + ATP + H2O = S-adenosyl-L-methionine + phosphate + diphosphate. Its pathway is amino-acid biosynthesis; S-adenosyl-L-methionine biosynthesis; S-adenosyl-L-methionine from L-methionine: step 1/1. Its function is as follows. Catalyzes the formation of S-adenosylmethionine (AdoMet) from methionine and ATP. The overall synthetic reaction is composed of two sequential steps, AdoMet formation and the subsequent tripolyphosphate hydrolysis which occurs prior to release of AdoMet from the enzyme. The chain is S-adenosylmethionine synthase from Thermosipho africanus (strain TCF52B).